The chain runs to 700 residues: Elongation factor G (700 aa).

One can recognise a tr-type G domain in the interval 8-290; that stretch reads ERYRNIGISA…AVVEYLPAPT (283 aa). GTP-binding positions include 17–24, 88–92, and 142–145; these read AHIDAGKT, DTPGH, and NKMD.

This sequence belongs to the TRAFAC class translation factor GTPase superfamily. Classic translation factor GTPase family. EF-G/EF-2 subfamily.

The protein resides in the cytoplasm. Functionally, catalyzes the GTP-dependent ribosomal translocation step during translation elongation. During this step, the ribosome changes from the pre-translocational (PRE) to the post-translocational (POST) state as the newly formed A-site-bound peptidyl-tRNA and P-site-bound deacylated tRNA move to the P and E sites, respectively. Catalyzes the coordinated movement of the two tRNA molecules, the mRNA and conformational changes in the ribosome. The chain is Elongation factor G from Haemophilus influenzae (strain PittEE).